Consider the following 231-residue polypeptide: LexA repressor (231 aa).

The segment at residues 26 to 46 (FDEMKDALDLRSKSGIHRLIT) is a DNA-binding region (H-T-H motif). Active-site for autocatalytic cleavage activity residues include S152 and K190.

The protein belongs to the peptidase S24 family. In terms of assembly, homodimer.

The enzyme catalyses Hydrolysis of Ala-|-Gly bond in repressor LexA.. Represses a number of genes involved in the response to DNA damage (SOS response), including recA and lexA. In the presence of single-stranded DNA, RecA interacts with LexA causing an autocatalytic cleavage which disrupts the DNA-binding part of LexA, leading to derepression of the SOS regulon and eventually DNA repair. The chain is LexA repressor from Bradyrhizobium diazoefficiens (strain JCM 10833 / BCRC 13528 / IAM 13628 / NBRC 14792 / USDA 110).